The chain runs to 247 residues: Adenosylcobinamide-GDP ribazoletransferase (247 aa).

6 consecutive transmembrane segments (helical) span residues 34–54, 59–79, 113–133, 138–158, 171–191, and 194–214; these read IVMF…IFIL, CGIP…TGGF, GGLA…ELAL, MLAA…LLMY, VFIG…AVIV, and VLLP…AIFI.

It belongs to the CobS family. It depends on Mg(2+) as a cofactor.

The protein localises to the cell inner membrane. The catalysed reaction is alpha-ribazole + adenosylcob(III)inamide-GDP = adenosylcob(III)alamin + GMP + H(+). It carries out the reaction alpha-ribazole 5'-phosphate + adenosylcob(III)inamide-GDP = adenosylcob(III)alamin 5'-phosphate + GMP + H(+). It participates in cofactor biosynthesis; adenosylcobalamin biosynthesis; adenosylcobalamin from cob(II)yrinate a,c-diamide: step 7/7. Joins adenosylcobinamide-GDP and alpha-ribazole to generate adenosylcobalamin (Ado-cobalamin). Also synthesizes adenosylcobalamin 5'-phosphate from adenosylcobinamide-GDP and alpha-ribazole 5'-phosphate. The sequence is that of Adenosylcobinamide-GDP ribazoletransferase from Salmonella schwarzengrund (strain CVM19633).